The chain runs to 642 residues: Chaperone protein DnaK (642 aa).

Thr-198 carries the post-translational modification Phosphothreonine; by autocatalysis. A disordered region spans residues 602–642 (AYAKMTEKQQSDDGAGTQNADHKEDDVVDADFEEVKSDKKD).

Belongs to the heat shock protein 70 family.

In terms of biological role, acts as a chaperone. The protein is Chaperone protein DnaK of Dichelobacter nodosus (strain VCS1703A).